Reading from the N-terminus, the 461-residue chain is Siroheme synthase (461 aa).

A precorrin-2 dehydrogenase /sirohydrochlorin ferrochelatase region spans residues 1-204 (MRYLPLFVYL…GNFRKANRVI (204 aa)). NAD(+)-binding positions include 22–23 (IV) and 43–44 (KT). Position 128 is a phosphoserine (serine 128). Residues 218 to 461 (GSVSLVGAGP…HNEISWFGNG (244 aa)) are uroporphyrinogen-III C-methyltransferase. Proline 227 lines the S-adenosyl-L-methionine pocket. Aspartate 250 functions as the Proton acceptor in the catalytic mechanism. Lysine 272 serves as the catalytic Proton donor. S-adenosyl-L-methionine-binding positions include 303–305 (GGD), isoleucine 308, methionine 386, and glycine 415.

This sequence in the N-terminal section; belongs to the precorrin-2 dehydrogenase / sirohydrochlorin ferrochelatase family. In the C-terminal section; belongs to the precorrin methyltransferase family.

The enzyme catalyses uroporphyrinogen III + 2 S-adenosyl-L-methionine = precorrin-2 + 2 S-adenosyl-L-homocysteine + H(+). It catalyses the reaction precorrin-2 + NAD(+) = sirohydrochlorin + NADH + 2 H(+). The catalysed reaction is siroheme + 2 H(+) = sirohydrochlorin + Fe(2+). It functions in the pathway cofactor biosynthesis; adenosylcobalamin biosynthesis; precorrin-2 from uroporphyrinogen III: step 1/1. It participates in cofactor biosynthesis; adenosylcobalamin biosynthesis; sirohydrochlorin from precorrin-2: step 1/1. The protein operates within porphyrin-containing compound metabolism; siroheme biosynthesis; precorrin-2 from uroporphyrinogen III: step 1/1. Its pathway is porphyrin-containing compound metabolism; siroheme biosynthesis; siroheme from sirohydrochlorin: step 1/1. It functions in the pathway porphyrin-containing compound metabolism; siroheme biosynthesis; sirohydrochlorin from precorrin-2: step 1/1. In terms of biological role, multifunctional enzyme that catalyzes the SAM-dependent methylations of uroporphyrinogen III at position C-2 and C-7 to form precorrin-2 via precorrin-1. Then it catalyzes the NAD-dependent ring dehydrogenation of precorrin-2 to yield sirohydrochlorin. Finally, it catalyzes the ferrochelation of sirohydrochlorin to yield siroheme. This Blochmanniella floridana protein is Siroheme synthase.